A 392-amino-acid polypeptide reads, in one-letter code: Metacaspase-1 (392 aa).

The span at 1-14 shows a compositional bias: polar residues; it reads MYPGSGNYSYNNRP. A disordered region spans residues 1–87; sequence MYPGSGNYSY…PSSIQQGNGQ (87 aa). Low complexity predominate over residues 41–51; it reads QQQQYQDQYQG. Over residues 53 to 63 the composition is skewed to polar residues; that stretch reads NRGQYQGQYQD. Active-site residues include H182 and C238.

It belongs to the peptidase C14B family.

Functionally, involved in cell death (apoptosis). This chain is Metacaspase-1 (MCA1), found in Candida glabrata (strain ATCC 2001 / BCRC 20586 / JCM 3761 / NBRC 0622 / NRRL Y-65 / CBS 138) (Yeast).